The following is a 231-amino-acid chain: 2,3-bisphosphoglycerate-dependent phosphoglycerate mutase (231 aa).

Substrate is bound by residues 8 to 15, 21 to 22, Arg-60, 87 to 90, Lys-98, 114 to 115, and 183 to 184; these read RHGESEWN, TG, ERHY, RR, and GN. His-9 serves as the catalytic Tele-phosphohistidine intermediate. Residue Glu-87 is the Proton donor/acceptor of the active site.

The protein belongs to the phosphoglycerate mutase family. BPG-dependent PGAM subfamily.

It catalyses the reaction (2R)-2-phosphoglycerate = (2R)-3-phosphoglycerate. It functions in the pathway carbohydrate degradation; glycolysis; pyruvate from D-glyceraldehyde 3-phosphate: step 3/5. Catalyzes the interconversion of 2-phosphoglycerate and 3-phosphoglycerate. The sequence is that of 2,3-bisphosphoglycerate-dependent phosphoglycerate mutase from Streptococcus pyogenes serotype M49 (strain NZ131).